Here is a 67-residue protein sequence, read N- to C-terminus: Large ribosomal subunit protein uL30 (67 aa).

This sequence belongs to the universal ribosomal protein uL30 family. In terms of assembly, part of the 50S ribosomal subunit.

This chain is Large ribosomal subunit protein uL30, found in Sorangium cellulosum (strain So ce56) (Polyangium cellulosum (strain So ce56)).